A 65-amino-acid chain; its full sequence is Large ribosomal subunit protein eL24 (65 aa).

Residues Cys-6, Cys-9, Cys-32, and Cys-36 each contribute to the Zn(2+) site. The C4-type zinc-finger motif lies at 6-36 (CAFCGADIPPGYGIMYVKSDGTVLRYCSRKC).

Belongs to the eukaryotic ribosomal protein eL24 family. Part of the 50S ribosomal subunit. Forms a cluster with proteins L3 and L14. It depends on Zn(2+) as a cofactor.

Its function is as follows. Binds to the 23S rRNA. The chain is Large ribosomal subunit protein eL24 from Pyrobaculum arsenaticum (strain DSM 13514 / JCM 11321 / PZ6).